A 173-amino-acid chain; its full sequence is Large ribosomal subunit protein bL9 (173 aa).

This sequence belongs to the bacterial ribosomal protein bL9 family.

Its function is as follows. Binds to the 23S rRNA. This Rickettsia bellii (strain OSU 85-389) protein is Large ribosomal subunit protein bL9.